The following is a 218-amino-acid chain: Riboflavin synthase (218 aa).

Lumazine-binding repeat units follow at residues 1 to 97 (MFTG…FGGH) and 98 to 194 (IVSG…ERLL). 2,4-dihydroxypteridine contacts are provided by residues 4-6 (GII), 48-50 (CLT), 62-67 (DLSIET), 101-103 (GHV), lysine 136, 145-147 (SLT), and 159-164 (TIVPHT).

In terms of assembly, homotrimer.

The enzyme catalyses 2 6,7-dimethyl-8-(1-D-ribityl)lumazine + H(+) = 5-amino-6-(D-ribitylamino)uracil + riboflavin. The protein operates within cofactor biosynthesis; riboflavin biosynthesis; riboflavin from 2-hydroxy-3-oxobutyl phosphate and 5-amino-6-(D-ribitylamino)uracil: step 2/2. Functionally, catalyzes the dismutation of two molecules of 6,7-dimethyl-8-ribityllumazine, resulting in the formation of riboflavin and 5-amino-6-(D-ribitylamino)uracil. This is Riboflavin synthase from Photobacterium phosphoreum.